The chain runs to 119 residues: DNA-binding protein inhibitor ID-3 (119 aa).

In terms of domain architecture, bHLH spans 28–80; sequence RGKSPSAEEPLSLLDDMNHCYSRLRELVPGVPRGTQLSQVEILQRVIDYILDL.

In terms of assembly, homodimer, and heterodimer with other HLH proteins. Interacts with COPS5 and COPS7A. Interacts with IFI204. Interacts with GATA4 and NKX2-5. Interacts with ANKRD2; both proteins cooperate in myoblast differentiation. Interacts with CLOCK and BMAL1. Phosphorylated in vitro by CDC2 and PKC.

The protein localises to the nucleus. Its function is as follows. Transcriptional regulator (lacking a basic DNA binding domain) which negatively regulates the basic helix-loop-helix (bHLH) transcription factors by forming heterodimers and inhibiting their DNA binding and transcriptional activity. Implicated in regulating a variety of cellular processes, including cellular growth, senescence, differentiation, apoptosis, angiogenesis, and neoplastic transformation. Involved in myogenesis by inhibiting skeletal muscle and cardiac myocyte differentiation and promoting muscle precursor cells proliferation. Inhibits the binding of E2A-containing protein complexes to muscle creatine kinase E-box enhancer. Regulates the circadian clock by repressing the transcriptional activator activity of the CLOCK-BMAL1 heterodimer. This chain is DNA-binding protein inhibitor ID-3 (Id3), found in Rattus norvegicus (Rat).